The sequence spans 475 residues: Sulfate adenylyltransferase subunit 1 (475 aa).

Positions 25 to 239 (KSLLRFLTCG…EVLETVEIQR (215 aa)) constitute a tr-type G domain. Residues 34-41 (GSVDDGKS) form a G1 region. 34-41 (GSVDDGKS) lines the GTP pocket. The G2 stretch occupies residues 92–96 (GITID). Residues 113–116 (DTPG) form a G3 region. Residues 113–117 (DTPGH) and 168–171 (NKMD) each bind GTP. The G4 stretch occupies residues 168-171 (NKMD). Residues 206-208 (SAL) are G5.

The protein belongs to the TRAFAC class translation factor GTPase superfamily. Classic translation factor GTPase family. CysN/NodQ subfamily. Heterodimer composed of CysD, the smaller subunit, and CysN.

The enzyme catalyses sulfate + ATP + H(+) = adenosine 5'-phosphosulfate + diphosphate. The protein operates within sulfur metabolism; hydrogen sulfide biosynthesis; sulfite from sulfate: step 1/3. In terms of biological role, with CysD forms the ATP sulfurylase (ATPS) that catalyzes the adenylation of sulfate producing adenosine 5'-phosphosulfate (APS) and diphosphate, the first enzymatic step in sulfur assimilation pathway. APS synthesis involves the formation of a high-energy phosphoric-sulfuric acid anhydride bond driven by GTP hydrolysis by CysN coupled to ATP hydrolysis by CysD. The sequence is that of Sulfate adenylyltransferase subunit 1 from Shigella flexneri serotype 5b (strain 8401).